A 439-amino-acid polypeptide reads, in one-letter code: Histidine--tRNA ligase (439 aa).

It belongs to the class-II aminoacyl-tRNA synthetase family. In terms of assembly, homodimer.

Its subcellular location is the cytoplasm. The catalysed reaction is tRNA(His) + L-histidine + ATP = L-histidyl-tRNA(His) + AMP + diphosphate + H(+). This Leptospira interrogans serogroup Icterohaemorrhagiae serovar copenhageni (strain Fiocruz L1-130) protein is Histidine--tRNA ligase.